Reading from the N-terminus, the 158-residue chain is Transcription elongation factor GreA (158 aa).

Residues 5 to 75 (EKLPMLAEGY…DLEDRVSRAQ (71 aa)) are a coiled coil.

This sequence belongs to the GreA/GreB family.

Necessary for efficient RNA polymerase transcription elongation past template-encoded arresting sites. The arresting sites in DNA have the property of trapping a certain fraction of elongating RNA polymerases that pass through, resulting in locked ternary complexes. Cleavage of the nascent transcript by cleavage factors such as GreA or GreB allows the resumption of elongation from the new 3'terminus. GreA releases sequences of 2 to 3 nucleotides. This is Transcription elongation factor GreA from Novosphingobium aromaticivorans (strain ATCC 700278 / DSM 12444 / CCUG 56034 / CIP 105152 / NBRC 16084 / F199).